Here is a 158-residue protein sequence, read N- to C-terminus: SsrA-binding protein (158 aa).

A disordered region spans residues 134-158 (KLHDKRETEKERDWNRQKSRLLKTG). Residues 137–149 (DKRETEKERDWNR) are compositionally biased toward basic and acidic residues.

This sequence belongs to the SmpB family.

The protein resides in the cytoplasm. In terms of biological role, required for rescue of stalled ribosomes mediated by trans-translation. Binds to transfer-messenger RNA (tmRNA), required for stable association of tmRNA with ribosomes. tmRNA and SmpB together mimic tRNA shape, replacing the anticodon stem-loop with SmpB. tmRNA is encoded by the ssrA gene; the 2 termini fold to resemble tRNA(Ala) and it encodes a 'tag peptide', a short internal open reading frame. During trans-translation Ala-aminoacylated tmRNA acts like a tRNA, entering the A-site of stalled ribosomes, displacing the stalled mRNA. The ribosome then switches to translate the ORF on the tmRNA; the nascent peptide is terminated with the 'tag peptide' encoded by the tmRNA and targeted for degradation. The ribosome is freed to recommence translation, which seems to be the essential function of trans-translation. The chain is SsrA-binding protein from Allorhizobium ampelinum (strain ATCC BAA-846 / DSM 112012 / S4) (Agrobacterium vitis (strain S4)).